A 139-amino-acid chain; its full sequence is Large ribosomal subunit protein uL16 (139 aa).

Residues 1–17 (MLQPKRTKYRKQQKGRM) show a composition bias toward basic residues. The disordered stretch occupies residues 1–25 (MLQPKRTKYRKQQKGRMKGLSQRGH).

This sequence belongs to the universal ribosomal protein uL16 family. Part of the 50S ribosomal subunit.

In terms of biological role, binds 23S rRNA and is also seen to make contacts with the A and possibly P site tRNAs. In Christiangramia forsetii (strain DSM 17595 / CGMCC 1.15422 / KT0803) (Gramella forsetii), this protein is Large ribosomal subunit protein uL16.